The following is a 142-amino-acid chain: RNA-directed DNA polymerase homolog (142 aa).

The protein localises to the mitochondrion. The catalysed reaction is RNA(n) + a ribonucleoside 5'-triphosphate = RNA(n+1) + diphosphate. In Oenothera berteroana (Bertero's evening primrose), this protein is RNA-directed DNA polymerase homolog.